We begin with the raw amino-acid sequence, 122 residues long: Acidic phospholipase A2 CTs-A3 (122 aa).

7 disulfide bridges follow: cysteine 26–cysteine 116, cysteine 28–cysteine 44, cysteine 43–cysteine 95, cysteine 49–cysteine 122, cysteine 50–cysteine 88, cysteine 57–cysteine 81, and cysteine 75–cysteine 86. Tyrosine 27, glycine 29, and glycine 31 together coordinate Ca(2+). Histidine 47 is a catalytic residue. Residue aspartate 48 participates in Ca(2+) binding. The active site involves aspartate 89.

Ca(2+) serves as cofactor. Expressed by the venom gland.

The protein resides in the secreted. The catalysed reaction is a 1,2-diacyl-sn-glycero-3-phosphocholine + H2O = a 1-acyl-sn-glycero-3-phosphocholine + a fatty acid + H(+). Snake venom phospholipase A2 (PLA2) that shows a moderate inhibition of ADP-induced human platelet aggregation when tested on platelet rich plasma. Exhibits moderate hydrolytic activities and prefers the anionic micelles (dPPC with deoxycholate) to the zwitterionic micelles (dPPC with Triton X-100). PLA2 catalyzes the calcium-dependent hydrolysis of the 2-acyl groups in 3-sn-phosphoglycerides. The chain is Acidic phospholipase A2 CTs-A3 from Trimeresurus stejnegeri (Chinese green tree viper).